The primary structure comprises 296 residues: Transposase for insertion sequence element IS629 (296 aa).

The Integrase catalytic domain occupies 125–285 (VAERPDQLWV…TPPAEAEKAY (161 aa)).

In terms of biological role, involved in the transposition of the insertion sequence. This chain is Transposase for insertion sequence element IS629, found in Shigella sonnei.